Here is a 155-residue protein sequence, read N- to C-terminus: MNQTELQQHMEEVSLQFFQKEFRHQAVFNTRLRTTGGRYLLKSHNIEMNPKYLENFGLEYFFGIMKHELCHYHLHLEKKGYQHRDKDFRELLKKVDAPRFCAAIPREITMHEYTCKSCGKSFLRQRRFNVNRYRCGSCGGRLKQTGSKKVYTESP.

The region spanning 7 to 145 (QQHMEEVSLQ…GSCGGRLKQT (139 aa)) is the SprT-like domain. Residue His-67 participates in Zn(2+) binding. Glu-68 is a catalytic residue. His-71 is a binding site for Zn(2+).

Belongs to the SprT family. Requires Zn(2+) as cofactor.

Its subcellular location is the cytoplasm. This Listeria innocua serovar 6a (strain ATCC BAA-680 / CLIP 11262) protein is Protein SprT-like.